The sequence spans 60 residues: Metallothionein B (60 aa).

The beta stretch occupies residues 1–28 (MDPCDCSKSGTCNCGGSCTCTNCSCTSC). Residues cysteine 4, cysteine 6, cysteine 12, cysteine 14, cysteine 18, cysteine 20, cysteine 23, cysteine 25, cysteine 28, cysteine 32, cysteine 33, cysteine 35, cysteine 36, cysteine 40, cysteine 43, cysteine 47, cysteine 49, cysteine 54, cysteine 58, and cysteine 59 each contribute to the a divalent metal cation site. The tract at residues 29–60 (KKSCCPCCPSGCTKCASGCVCKGKTCDTSCCQ) is alpha.

It belongs to the metallothionein superfamily. Type 1 family.

Functionally, metallothioneins have a high content of cysteine residues that bind various heavy metals. In Chionodraco hamatus (Antarctic teleost icefish), this protein is Metallothionein B (mtb).